The following is a 127-amino-acid chain: Glycine cleavage system H protein (127 aa).

Residues lysine 23 to glutamate 105 enclose the Lipoyl-binding domain. Lysine 64 carries the post-translational modification N6-lipoyllysine.

Belongs to the GcvH family. As to quaternary structure, the glycine cleavage system is composed of four proteins: P, T, L and H. It depends on (R)-lipoate as a cofactor.

Functionally, the glycine cleavage system catalyzes the degradation of glycine. The H protein shuttles the methylamine group of glycine from the P protein to the T protein. The sequence is that of Glycine cleavage system H protein from Coprothermobacter proteolyticus (strain ATCC 35245 / DSM 5265 / OCM 4 / BT).